The sequence spans 443 residues: Zinc finger protein ZIC 1 (443 aa).

Residues 221–256 (LICKWIEPEQLANPKKSCNKTFSTMHELVTHVTVEH) form a C2H2-type 1; atypical zinc finger. A C2H2-type 2; atypical zinc finger spans residues 265–292 (HICVWEECPREGKPFKAKYKLINHIRVH). 3 consecutive C2H2-type zinc fingers follow at residues 298–322 (FPCP…KRTH), 328–352 (FKCE…MHVH), and 358–380 (YLCK…MKVH). The tract at residues 371–433 (SSLRKHMKVH…AVHHTSNHST (63 aa)) is disordered. Residues 383–396 (SSQGSQPSPAASSG) are compositionally biased toward low complexity. Over residues 397–413 (YESSTPPTIVSPSAENQ) the composition is skewed to polar residues. A negatively regulates transcriptional activity region spans residues 408–443 (PSAENQSTSSLSPSSSAVHHTSNHSTLSSNFNEWYV). Residues 414–433 (STSSLSPSSSAVHHTSNHST) show a composition bias toward low complexity.

It belongs to the GLI C2H2-type zinc-finger protein family. In terms of tissue distribution, during early gastrula stages, widely expressed in the dorsal ectoderm. At mid-gastrula, expressed throughout the presumptive neural plate and at late gastrula, expression gradually diminishes in the dorsal midline and increases in the anterior folds. By early neurula stage, expression becomes restricted to the lateral edges of the neural plate, corresponding to the presumptive dorsal neural plate and neural crest, and in flanking ectoderm. In early tailbud stages (stages 22-23), expressed in the dorsal forebrain, midbrain and hindbrain. Subsequently expressed in the telencephalon and at the diencephalon/mesencephalon boundary. In the spinal cord, expression is restricted to the dorsal most region including the roof plate. Also expressed in the somites but not in eye vesicles. At larval stages, expressed mainly in the dorsal neural tube throughout its anteroposterior axis.

The protein localises to the nucleus. It localises to the cytoplasm. Functionally, transcriptional activator that induces expression of multiple genes including pax3, en2, snai2/slug, feb and a subset of wnt genes. Has multiple key roles in the regulation of neural induction and neurogenesis: acts as a neural competence factor, sensitizing the presumptive neuroectoderm to respond to subsequent neuralizing signals. Promotes both preplacodal cell fates and neural crest cell fates, two of the cell populations that arise from the neural plate border. Cooperates with pax3 in concert with wnt signaling to determine neural crest fate. Synergizes with the bmp-inhibitor noggin/nog and acts through the wnt pathway to induce expression of en2. May bind to the minimal GLI-consensus sequence 5'-TGGGTGGTC-3'. The protein is Zinc finger protein ZIC 1 (zic1) of Xenopus laevis (African clawed frog).